A 235-amino-acid chain; its full sequence is Octanoyltransferase (235 aa).

The 185-residue stretch at 30–214 (NELEDTLLLL…YFGKVFGAKF (185 aa)) folds into the BPL/LPL catalytic domain. Residues 75 to 82 (RGGDVTYH), 144 to 146 (AIG), and 157 to 159 (GFA) contribute to the substrate site. The Acyl-thioester intermediate role is filled by C175.

This sequence belongs to the LipB family.

It is found in the cytoplasm. The catalysed reaction is octanoyl-[ACP] + L-lysyl-[protein] = N(6)-octanoyl-L-lysyl-[protein] + holo-[ACP] + H(+). The protein operates within protein modification; protein lipoylation via endogenous pathway; protein N(6)-(lipoyl)lysine from octanoyl-[acyl-carrier-protein]: step 1/2. In terms of biological role, catalyzes the transfer of endogenously produced octanoic acid from octanoyl-acyl-carrier-protein onto the lipoyl domains of lipoate-dependent enzymes. Lipoyl-ACP can also act as a substrate although octanoyl-ACP is likely to be the physiological substrate. The protein is Octanoyltransferase of Caldicellulosiruptor saccharolyticus (strain ATCC 43494 / DSM 8903 / Tp8T 6331).